The chain runs to 290 residues: Porphobilinogen deaminase (290 aa).

Cys-237 is modified (S-(dipyrrolylmethanemethyl)cysteine).

Belongs to the HMBS family. As to quaternary structure, monomer. The cofactor is dipyrromethane.

It carries out the reaction 4 porphobilinogen + H2O = hydroxymethylbilane + 4 NH4(+). It participates in porphyrin-containing compound metabolism; protoporphyrin-IX biosynthesis; coproporphyrinogen-III from 5-aminolevulinate: step 2/4. Its function is as follows. Tetrapolymerization of the monopyrrole PBG into the hydroxymethylbilane pre-uroporphyrinogen in several discrete steps. This chain is Porphobilinogen deaminase, found in Clostridium botulinum (strain Kyoto / Type A2).